The primary structure comprises 555 residues: Energy-dependent translational throttle protein EttA (555 aa).

ABC transporter domains follow at residues 6–259 and 324–550; these read YTMH…AQEA and LEVS…RIKY. 39 to 46 is an ATP binding site; it reads GLNGAGKS. The tract at residues 95-139 is arm; that stretch reads SEVVNALKRLDEVYALYADPDADFDKLAAEQGRLEEIIQAHDGHN. The interval 242-322 is ptIM; sequence GNYSSWLEQK…IPPGPRLGDK (81 aa). ATP is bound at residue 356-363; the sequence is GPNGAGKS.

It belongs to the ABC transporter superfamily. ABCF family. Translational throttle EttA subfamily. As to quaternary structure, monomer. Probably contacts ribosomal proteins L1, L5, L33 and S7, the 16S and 23S rRNA and the P-site containing tRNA(fMet).

It is found in the cytoplasm. The enzyme catalyses ATP + H2O = ADP + phosphate + H(+). In terms of biological role, a translation factor that gates the progression of the 70S ribosomal initiation complex (IC, containing tRNA(fMet) in the P-site) into the translation elongation cycle by using a mechanism sensitive to the ATP/ADP ratio. Binds to the 70S ribosome E-site where it modulates the state of the translating ribosome during subunit translocation. ATP hydrolysis probably frees it from the ribosome, which can enter the elongation phase. This Escherichia coli O6:H1 (strain CFT073 / ATCC 700928 / UPEC) protein is Energy-dependent translational throttle protein EttA.